The primary structure comprises 135 residues: Cystatin-1 (135 aa).

The signal sequence occupies residues 1–24 (MRKHRIVSLVAALLVLLALAAVSS). The short motif at 86 to 90 (QVVAG) is the Secondary area of contact element.

The protein belongs to the cystatin family. Phytocystatin subfamily.

The sequence is that of Cystatin-1 (RAMDAZC7) from Zea mays (Maize).